A 342-amino-acid chain; its full sequence is 4-hydroxy-2-oxovalerate aldolase (342 aa).

In terms of domain architecture, Pyruvate carboxyltransferase spans 7–257 (IWITEVALRD…KTGVDLYKMM (251 aa)). Position 15–16 (15–16 (RD)) interacts with substrate. Asp16 lines the Mn(2+) pocket. The Proton acceptor role is filled by His19. 2 residues coordinate substrate: Ser169 and His196. Mn(2+) contacts are provided by His196 and His198. Tyr287 is a substrate binding site.

The protein belongs to the 4-hydroxy-2-oxovalerate aldolase family.

The catalysed reaction is (S)-4-hydroxy-2-oxopentanoate = acetaldehyde + pyruvate. This Geobacillus thermodenitrificans (strain NG80-2) protein is 4-hydroxy-2-oxovalerate aldolase (nbaI).